The sequence spans 469 residues: ATP-dependent protease ATPase subunit HslU (469 aa).

ATP is bound by residues Ile24, 66 to 71 (GVGKTE), Asp282, Glu347, and Arg419.

It belongs to the ClpX chaperone family. HslU subfamily. In terms of assembly, a double ring-shaped homohexamer of HslV is capped on each side by a ring-shaped HslU homohexamer. The assembly of the HslU/HslV complex is dependent on binding of ATP.

The protein localises to the cytoplasm. ATPase subunit of a proteasome-like degradation complex; this subunit has chaperone activity. The binding of ATP and its subsequent hydrolysis by HslU are essential for unfolding of protein substrates subsequently hydrolyzed by HslV. HslU recognizes the N-terminal part of its protein substrates and unfolds these before they are guided to HslV for hydrolysis. The protein is ATP-dependent protease ATPase subunit HslU of Listeria monocytogenes serotype 4a (strain HCC23).